We begin with the raw amino-acid sequence, 59 residues long: Potassium channel toxin alpha-KTx 16.2 (59 aa).

The first 22 residues, Met-1–Ala-22, serve as a signal peptide directing secretion. Intrachain disulfides connect Cys-30/Cys-51, Cys-36/Cys-56, and Cys-40/Cys-58.

Belongs to the short scorpion toxin superfamily. Potassium channel inhibitor family. Alpha-KTx 16 subfamily. In terms of tissue distribution, expressed by the venom gland.

The protein resides in the secreted. Functionally, alpha-KTx 16.2: inhibits large conductance calcium-activated potassium channels (KCa1.1/Slo-beta4 KCNMA1/KCNMB4). It appears to block channel activity by a simple bimolecular inhibition process. Shows a fast association rate and a slow dissociation rate of binding on rat brain synaptosome. Significantly inhibits voltage-dependent sodium current and voltage-dependent delayed rectifier potassium currents. Significantly inhibits voltage-dependent sodium current (Nav) and voltage-dependent delayed rectifier potassium current. The polypeptide is Potassium channel toxin alpha-KTx 16.2 (Olivierus martensii (Manchurian scorpion)).